The primary structure comprises 150 residues: Transcriptional repressor NrdR (150 aa).

A zinc finger spans residues 3–34 (CPFCNASDTKVVDTRASEDDKIVRRRRECISC). Residues 49 to 139 (LTVVKKDKNR…VYREFTDVKS (91 aa)) form the ATP-cone domain.

This sequence belongs to the NrdR family. It depends on Zn(2+) as a cofactor.

Functionally, negatively regulates transcription of bacterial ribonucleotide reductase nrd genes and operons by binding to NrdR-boxes. In Finegoldia magna (strain ATCC 29328 / DSM 20472 / WAL 2508) (Peptostreptococcus magnus), this protein is Transcriptional repressor NrdR.